Consider the following 331-residue polypeptide: Nucleotide sugar transporter SLC35B4 (331 aa).

11 consecutive transmembrane segments (helical) span residues 4–24 (ALAV…LELL), 30–50 (GCGN…GFLF), 59–79 (PAIP…VSVV), 92–112 (LHMI…IIIL), 117–137 (SIFK…CTFM), 153–173 (GFQA…ALLM), 201–221 (ALPL…AVLF), 229–249 (IPVI…NIIT), 251–267 (YVCI…CASL), 268–288 (TVTL…ILYF), and 291–311 (PFTL…LMYT). The short motif at 326–331 (KDSKKN) is the Mediates endoplasmic reticulum retention element.

The protein belongs to the nucleotide-sugar transporter family. SLC35B subfamily.

It is found in the endoplasmic reticulum membrane. The catalysed reaction is UDP-N-acetyl-alpha-D-glucosamine(in) + UDP-alpha-D-glucuronate(out) = UDP-N-acetyl-alpha-D-glucosamine(out) + UDP-alpha-D-glucuronate(in). The enzyme catalyses UDP-alpha-D-xylose(in) + UDP-alpha-D-glucuronate(out) = UDP-alpha-D-xylose(out) + UDP-alpha-D-glucuronate(in). Its function is as follows. Antiporter that transports nucleotide sugars across the endoplasmic reticulum (ER) membrane in exchange for another nucleotide sugar. May couple UDP-alpha-D-glucuronate (UDP-GlcA) or UDP-alpha-D-xylose (UDP-Xyl) efflux to UDP-alpha-D-glucuronate (UDP-GlcA) influx into the ER lumen, which in turn stimulates glucuronidation and excretion of endobiotics and xenobiotics. Functionally, has UDP-GlcA:UDP-GlcNAc antiporter activity. The polypeptide is Nucleotide sugar transporter SLC35B4 (SLC35B4) (Homo sapiens (Human)).